We begin with the raw amino-acid sequence, 359 residues long: CMP-N-acetylneuraminate-poly-alpha-2,8-sialyltransferase (359 aa).

The Cytoplasmic segment spans residues M1–R7. Residues W8–Y20 form a helical; Signal-anchor for type II membrane protein membrane-spanning segment. The Lumenal portion of the chain corresponds to K21–Q359. 3 N-linked (GlcNAc...) asparagine glycosylation sites follow: N50, N74, and N119. Cystine bridges form between C142–C292 and C156–C356. The CMP-N-acetyl-beta-neuraminate site is built by N147 and N170. N204 and N219 each carry an N-linked (GlcNAc...) asparagine glycan. 4 residues coordinate CMP-N-acetyl-beta-neuraminate: S279, T280, G281, and W301. Residue H331 is the Proton donor/acceptor of the active site.

This sequence belongs to the glycosyltransferase 29 family. Post-translationally, autopolysialylated.

It is found in the golgi apparatus membrane. The protein resides in the secreted. The enzyme catalyses [N-acetyl-alpha-D-neuraminosyl-(2-&gt;8)](n) + CMP-N-acetyl-beta-neuraminate = [N-acetyl-alpha-D-neuraminosyl-(2-&gt;8)](n+1) + CMP + H(+). In terms of biological role, catalyzes the transfer of a sialic acid from a CMP-linked sialic acid donor onto a terminal alpha-2,3-, alpha-2,6-, or alpha-2,8-linked sialic acid of an N-linked glycan protein acceptor through alpha-2,8-linkages. Therefore, participates in polysialic acid synthesis on various sialylated N-acetyllactosaminyl oligosaccharides, including NCAM1 N-glycans, FETUB N-glycans and AHSG. It is noteworthy that alpha-2,3-linked sialic acid is apparently a better acceptor than alpha-2,6-linked sialic acid. The chain is CMP-N-acetylneuraminate-poly-alpha-2,8-sialyltransferase (ST8SIA4) from Bos taurus (Bovine).